Consider the following 311-residue polypeptide: Fluoride export protein 1 (311 aa).

At 1–6 (MLLTQS) the chain is on the cytoplasmic side. A helical transmembrane segment spans residues 7-25 (YFCIMSMLGTLARLGLTAL). Residues 26–29 (NTYP) are Extracellular-facing. The helical transmembrane segment at 30 to 50 (GAPFSGLLWVQFVGCVIMGFC) threads the bilayer. Topologically, residues 51-65 (QTESVFFPRPKHNAT) are cytoplasmic. A helical membrane pass occupies residues 66-86 (FLLAITTGFCGSLTTFSSWML). Residues 87–106 (QMFTGMANLDPFERRGRGYS) lie on the Extracellular side of the membrane. Residues 107-127 (FLSVVSDFMVTMCIAMSSLIW) form a helical membrane-spanning segment. Residues 128-154 (GKQIGKTTGQWRIGKVAFAWPIPAHTH) are Cytoplasmic-facing. A helical membrane pass occupies residues 155–175 (IVVRVLLLLLSICFFVGAAFY). Over 176-186 (TAYTTNVTHRG) the chain is Extracellular. Asn181 carries an N-linked (GlcNAc...) asparagine glycan. Residues 187-207 (IGFSLIFSPFAALTRLYLARF) form a helical membrane-spanning segment. At 208–212 (LNSPQ) the chain is on the cytoplasmic side. A helical transmembrane segment spans residues 213-233 (YFIPYGTLCANVFATLLLSIM). Topologically, residues 234 to 250 (YMIPQITHCTPVSRSVM) are extracellular. The helical transmembrane segment at 251 to 268 (YGIQNGFCAVLSTLSTFS) threads the bilayer. At 269–278 (NELHTMPIKR) the chain is on the cytoplasmic side. A helical transmembrane segment spans residues 279-299 (AYIYCIISVAISFSICVIVDG). Residues 300 to 311 (ATAWGHGYTEKY) lie on the Extracellular side of the membrane.

Belongs to the fluoride channel Fluc/FEX (TC 1.A.43) family.

It localises to the cell membrane. The catalysed reaction is fluoride(in) = fluoride(out). Its function is as follows. Fluoride channel required for the rapid expulsion of cytoplasmic fluoride. This chain is Fluoride export protein 1 (fex1), found in Schizosaccharomyces pombe (strain 972 / ATCC 24843) (Fission yeast).